A 358-amino-acid chain; its full sequence is UDP-N-acetylglucosamine--N-acetylmuramyl-(pentapeptide) pyrophosphoryl-undecaprenol N-acetylglucosamine transferase (358 aa).

UDP-N-acetyl-alpha-D-glucosamine is bound by residues 12-14 (TGG), N124, R162, S185, I242, 261-266 (ALTVSE), and Q287.

Belongs to the glycosyltransferase 28 family. MurG subfamily.

It is found in the cell inner membrane. It carries out the reaction di-trans,octa-cis-undecaprenyl diphospho-N-acetyl-alpha-D-muramoyl-L-alanyl-D-glutamyl-meso-2,6-diaminopimeloyl-D-alanyl-D-alanine + UDP-N-acetyl-alpha-D-glucosamine = di-trans,octa-cis-undecaprenyl diphospho-[N-acetyl-alpha-D-glucosaminyl-(1-&gt;4)]-N-acetyl-alpha-D-muramoyl-L-alanyl-D-glutamyl-meso-2,6-diaminopimeloyl-D-alanyl-D-alanine + UDP + H(+). The protein operates within cell wall biogenesis; peptidoglycan biosynthesis. Cell wall formation. Catalyzes the transfer of a GlcNAc subunit on undecaprenyl-pyrophosphoryl-MurNAc-pentapeptide (lipid intermediate I) to form undecaprenyl-pyrophosphoryl-MurNAc-(pentapeptide)GlcNAc (lipid intermediate II). In Pseudoalteromonas translucida (strain TAC 125), this protein is UDP-N-acetylglucosamine--N-acetylmuramyl-(pentapeptide) pyrophosphoryl-undecaprenol N-acetylglucosamine transferase.